Here is a 31-residue protein sequence, read N- to C-terminus: Hemocyanin subunit 1 (31 aa).

The protein belongs to the tyrosinase family. Hemocyanin subfamily. As to expression, hemolymph.

It is found in the secreted. The protein resides in the extracellular space. Its function is as follows. Hemocyanins are copper-containing oxygen carriers occurring freely dissolved in the hemolymph of many mollusks and arthropods. The chain is Hemocyanin subunit 1 from Homarus americanus (American lobster).